The chain runs to 278 residues: Elongation factor Ts (278 aa).

The tract at residues 80 to 83 (TDFV) is involved in Mg(2+) ion dislocation from EF-Tu.

It belongs to the EF-Ts family.

The protein localises to the cytoplasm. Associates with the EF-Tu.GDP complex and induces the exchange of GDP to GTP. It remains bound to the aminoacyl-tRNA.EF-Tu.GTP complex up to the GTP hydrolysis stage on the ribosome. This is Elongation factor Ts from Paenarthrobacter aurescens (strain TC1).